The chain runs to 344 residues: MNQTVSLQQLADKIGASLHLTDGDSGETQIHSLSTLASAGNGQISFLSNSRYRSQLEKTAAQAVILKSEDLSHCQCSALVMDNPYVGFALAAQLLDSTPRSADGISPLAVIADDVELGDNVSIGAHAVIESGVKLADNVQIGPGCFIGKEVSVGANTKLWANVTLYHRVVLGQDCLIQSATVIGADGFGYANDKGRWVKIPQLGTVILGDRVEVGASSTIDRGALDDTIIGNGVIIDNQCQVAHNVIIGENTAIAGCTVVAGSVTIGRNCTIGGMVAINGHMEICDNVYITGMSMVTKAIDKPGVYSSGMPAIENREWRKNAVALRNLSTLNQRVKTLEKSHLK.

His-244 acts as the Proton acceptor in catalysis.

It belongs to the transferase hexapeptide repeat family. LpxD subfamily. Homotrimer.

It carries out the reaction a UDP-3-O-[(3R)-3-hydroxyacyl]-alpha-D-glucosamine + a (3R)-hydroxyacyl-[ACP] = a UDP-2-N,3-O-bis[(3R)-3-hydroxyacyl]-alpha-D-glucosamine + holo-[ACP] + H(+). The protein operates within bacterial outer membrane biogenesis; LPS lipid A biosynthesis. Its function is as follows. Catalyzes the N-acylation of UDP-3-O-acylglucosamine using 3-hydroxyacyl-ACP as the acyl donor. Is involved in the biosynthesis of lipid A, a phosphorylated glycolipid that anchors the lipopolysaccharide to the outer membrane of the cell. The protein is UDP-3-O-acylglucosamine N-acyltransferase of Pseudoalteromonas atlantica (strain T6c / ATCC BAA-1087).